The chain runs to 489 residues: Protein nucleotidyltransferase YdiU (489 aa).

Residues glycine 88, glycine 90, arginine 91, lysine 111, aspartate 123, glycine 124, arginine 174, and arginine 181 each contribute to the ATP site. The active-site Proton acceptor is aspartate 250. Positions 251 and 260 each coordinate Mg(2+). Aspartate 260 contributes to the ATP binding site.

It belongs to the SELO family. Mg(2+) is required as a cofactor. Requires Mn(2+) as cofactor.

The enzyme catalyses L-seryl-[protein] + ATP = 3-O-(5'-adenylyl)-L-seryl-[protein] + diphosphate. It carries out the reaction L-threonyl-[protein] + ATP = 3-O-(5'-adenylyl)-L-threonyl-[protein] + diphosphate. It catalyses the reaction L-tyrosyl-[protein] + ATP = O-(5'-adenylyl)-L-tyrosyl-[protein] + diphosphate. The catalysed reaction is L-histidyl-[protein] + UTP = N(tele)-(5'-uridylyl)-L-histidyl-[protein] + diphosphate. The enzyme catalyses L-seryl-[protein] + UTP = O-(5'-uridylyl)-L-seryl-[protein] + diphosphate. It carries out the reaction L-tyrosyl-[protein] + UTP = O-(5'-uridylyl)-L-tyrosyl-[protein] + diphosphate. Functionally, nucleotidyltransferase involved in the post-translational modification of proteins. It can catalyze the addition of adenosine monophosphate (AMP) or uridine monophosphate (UMP) to a protein, resulting in modifications known as AMPylation and UMPylation. This is Protein nucleotidyltransferase YdiU from Vibrio cholerae serotype O1 (strain ATCC 39315 / El Tor Inaba N16961).